The chain runs to 2947 residues: 3'-5' exoribonuclease HELZ2 (2947 aa).

The segment at 85–114 adopts a C3H1-type 1 zinc-finger fold; it reads PMRYQVCHYYRPGLGCRRHWNRCTFARSPE. The C2H2-type zinc-finger motif lies at 167 to 187; the sequence is CFTCCPPCLCPVDPRGHCPKH. The C3H1-type 2 zinc finger occupies 221-245; sequence YCMYVGRGVPCRHGASRCEYAHSAV. The C2H2-type; atypical zinc-finger motif lies at 289-311; that stretch reads CHACLVTCNSQEAFENHCSSLEH. The UvrD-like helicase ATP-binding domain maps to 769–1317; that stretch reads VGLIAGRRPE…ELLDESQQVT (549 aa). 790-797 is a binding site for ATP; sequence GPFGTGKT. An interaction with THRAP3 region spans residues 809-1290; it reads QQPHTKVLIC…GGMSEEDSES (482 aa). A DEAA box motif is present at residues 913–916; that stretch reads DEAA. The interval 1260–1292 is disordered; it reads EDTASGNSASRDAAAEVSTLEGGMSEEDSESDF. Short sequence motifs (LXXLL motif) lie at residues 1306–1310, 1348–1352, 1403–1407, and 2240–2244; these read LKELL, LWKFL, LVQIL, and LEGLP. Residue Arg-2381 is modified to Omega-N-methylarginine. Residues 2413–2947 form an interaction with THRAP3 region; the sequence is PEPCRGNWPR…RVQRKSALSS (535 aa). The UvrD-like helicase ATP-binding 2 domain occupies 2449 to 2726; the sequence is LNQSQDRAVR…IMLDTQYRMH (278 aa). Residue 2470 to 2477 participates in ATP binding; it reads GPPGTGKT. The LXXLL motif 5 motif lies at 2525-2529; the sequence is LGGLL.

Belongs to the DNA2/NAM7 helicase family. Interacts with PPARA (via DNA-binding domain) and PPARG; the interaction stimulates the transcriptional activity of PPARA and PPARG. Interacts with THRAP3; the interaction is direct and HELZ2 and THRAP3 synergistically enhance the transcriptional activity of PPARG. It is probably part of the peroxisome proliferator activated receptor alpha interacting complex (PRIC).

Its subcellular location is the cytoplasm. It carries out the reaction Exonucleolytic cleavage in the 3'- to 5'-direction to yield nucleoside 5'-phosphates.. It catalyses the reaction ATP + H2O = ADP + phosphate + H(+). Functionally, can degrade highly structured RNAs through its concerted ATP-dependent RNA helicase and 3' to 5' exoribonuclease activities. Shows a strong preference for pyrimidine over purine residues for its nuclease activity. Acts as a transcriptional coactivator for a number of nuclear receptors including PPARA, PPARG, THRA, THRB and RXRA. The chain is 3'-5' exoribonuclease HELZ2 (Helz2) from Mus musculus (Mouse).